The sequence spans 597 residues: Inactive metallocarboxypeptidase ECM14 (597 aa).

An N-terminal signal peptide occupies residues 1-21; it reads MRLFTHGQVLALLAFVNTISA. Residues 22-174 constitute a propeptide that is removed on maturation; sequence TPSFSTNSYP…QTIYESYPSP (153 aa). Low complexity predominate over residues 170–179; sequence SYPSPSQSPS. The segment at 170–189 is disordered; sequence SYPSPSQSPSGRERGFLPSG. One can recognise a Peptidase M14 domain in the interval 202–522; that stretch reads NYQPLSVIVP…NAVMMLGRFL (321 aa). Positions 264 and 267 each coordinate Zn(2+). Substrate is bound by residues 264 to 267, R322, and 339 to 340; these read HARE and DR. A disulfide bridge links C333 with C356. N-linked (GlcNAc...) asparagine glycosylation is present at N349. Position 396 (H396) interacts with Zn(2+). 397–398 provides a ligand contact to substrate; sequence SY. Residues 543 to 597 are disordered; sequence KDDKPILNDDDDDDADTNDDGIGRKDDSWIPDEYKGDNDRDESDGGWAFRRLRKR. Acidic residues predominate over residues 550–561; the sequence is NDDDDDDADTND. Basic and acidic residues predominate over residues 563–580; the sequence is GIGRKDDSWIPDEYKGDN.

The protein belongs to the peptidase M14 family. Zn(2+) serves as cofactor.

It localises to the vacuole. The protein localises to the secreted. Inactive carboxypeptidase that may play a role in cell wall organization and biogenesis. The sequence is that of Inactive metallocarboxypeptidase ECM14 (ECM14) from Ajellomyces capsulatus (strain G186AR / H82 / ATCC MYA-2454 / RMSCC 2432) (Darling's disease fungus).